The primary structure comprises 208 residues: Protein-L-isoaspartate O-methyltransferase (208 aa).

The active site involves S59.

It belongs to the methyltransferase superfamily. L-isoaspartyl/D-aspartyl protein methyltransferase family. Monomer.

The protein resides in the cytoplasm. It carries out the reaction [protein]-L-isoaspartate + S-adenosyl-L-methionine = [protein]-L-isoaspartate alpha-methyl ester + S-adenosyl-L-homocysteine. Catalyzes the methyl esterification of L-isoaspartyl residues in peptides and proteins that result from spontaneous decomposition of normal L-aspartyl and L-asparaginyl residues. It plays a role in the repair and/or degradation of damaged proteins. In Shigella flexneri, this protein is Protein-L-isoaspartate O-methyltransferase (pcm).